A 543-amino-acid polypeptide reads, in one-letter code: Probable protein kinase UbiB (543 aa).

The region spanning 123–501 (DFDSQALASA…QQRQGQSRYL (379 aa)) is the Protein kinase domain. ATP contacts are provided by residues 129 to 137 (LASASIAQV) and K152. The Proton acceptor role is filled by D287. Residues 517-539 (LADATEVSTGFIVAGALAWFIGW) traverse the membrane as a helical segment.

This sequence belongs to the ABC1 family. UbiB subfamily.

Its subcellular location is the cell inner membrane. It functions in the pathway cofactor biosynthesis; ubiquinone biosynthesis [regulation]. Is probably a protein kinase regulator of UbiI activity which is involved in aerobic coenzyme Q (ubiquinone) biosynthesis. This is Probable protein kinase UbiB from Yersinia pseudotuberculosis serotype O:1b (strain IP 31758).